Here is a 701-residue protein sequence, read N- to C-terminus: Protein UL29/UL28 (701 aa).

The tract at residues 1 to 33 is disordered; that stretch reads MSGRRKGCSAATASSSSSSPPSRLPPLPGHARR.

It belongs to the herpesviridae US22 family. Interacts with UL38 and host HDAC1; these interactions are necessary for the HDAC1 interaction with UL38. Interacts with host MTA2.

It localises to the virion. The protein resides in the host nucleus. It is found in the host cytoplasm. Contributes to activation of immediate-early gene expression. The protein is Protein UL29/UL28 (UL29) of Homo sapiens (Human).